A 684-amino-acid chain; its full sequence is Beta-mannosyltransferase 1 (684 aa).

The Cytoplasmic portion of the chain corresponds to 1-28 (MDKFIQSFSHQYLDSSSSLKLTARRKRK). Residues 29 to 49 (LTILGLFLFSLISLMIIISYS) traverse the membrane as a helical segment. At 50–684 (NNNILPGLSG…KFCKIYGETF (635 aa)) the chain is on the extracellular side. Asparagine 297 carries an N-linked (GlcNAc...) asparagine glycan.

This sequence belongs to the BMT family.

Its subcellular location is the membrane. Functionally, beta-mannosyltransferase involved in cell wall biosynthesis. Required for addition of the first beta-mannose residue to acid-stable fraction of cell wall phosphopeptidomannan. Plays a key role in reducing host inflammatory response. The chain is Beta-mannosyltransferase 1 (BMT1) from Candida albicans (strain SC5314 / ATCC MYA-2876) (Yeast).